Here is a 554-residue protein sequence, read N- to C-terminus: Malate synthase 2 (554 aa).

The active-site Proton acceptor is Arg-177. Catalysis depends on Asp-457, which acts as the Proton donor. The short motif at 552 to 554 (SKL) is the SKL peroxisome targeting motif element.

Belongs to the malate synthase family. Interacts with PEX9.

The protein resides in the peroxisome matrix. The enzyme catalyses glyoxylate + acetyl-CoA + H2O = (S)-malate + CoA + H(+). Its function is as follows. Allantoin metabolism-specific malate synthase involved in the recycling the glyoxylate generated during allantoin degradation by the ureidoglycollate (UG) hydrolase reaction. The sequence is that of Malate synthase 2 from Saccharomyces cerevisiae (strain ATCC 204508 / S288c) (Baker's yeast).